We begin with the raw amino-acid sequence, 426 residues long: Tol-Pal system protein TolB (426 aa).

Positions 1-24 are cleaved as a signal peptide; it reads MKLKSRFTSIIGVITLFFSQTVTA.

It belongs to the TolB family. In terms of assembly, the Tol-Pal system is composed of five core proteins: the inner membrane proteins TolA, TolQ and TolR, the periplasmic protein TolB and the outer membrane protein Pal. They form a network linking the inner and outer membranes and the peptidoglycan layer.

It is found in the periplasm. Part of the Tol-Pal system, which plays a role in outer membrane invagination during cell division and is important for maintaining outer membrane integrity. This Actinobacillus pleuropneumoniae serotype 3 (strain JL03) protein is Tol-Pal system protein TolB.